A 1149-amino-acid chain; its full sequence is Protein deacetylase HDAC6 (1149 aa).

The segment at methionine 1–proline 61 is disordered. A compositionally biased stretch (polar residues) spans asparagine 18–threonine 29. Serine 21 is modified (phosphoserine). Arginine 32 carries the omega-N-methylarginine modification. Serine 43 carries the phosphoserine modification. The Nuclear export signal motif lies at leucine 66–leucine 75. Histone deacetylase regions lie at residues leucine 87–glycine 403 and glycine 481–glycine 799. The active-site 1 is histidine 215. Residue histidine 610 is the 2 of the active site. The disordered stretch occupies residues alanine 954 to serine 975. 4 positions are modified to phosphothreonine: threonine 958, threonine 961, threonine 967, and threonine 971. Positions alanine 964–serine 975 are enriched in polar residues. Phosphoserine is present on serine 975. The UBP-type zinc-finger motif lies at serine 1045–glutamate 1143. 7 residues coordinate Zn(2+): cysteine 1047, histidine 1049, cysteine 1067, cysteine 1070, cysteine 1079, cysteine 1082, and cysteine 1087. Positions serine 1088–tyrosine 1090 are ubiquitin binding. Zn(2+) is bound by residues histidine 1094, histidine 1098, histidine 1104, cysteine 1117, and cysteine 1120. Residues tryptophan 1116–tyrosine 1123 are ubiquitin binding. Serine 1148 carries the phosphoserine modification.

The protein belongs to the histone deacetylase family. HD type 2 subfamily. As to quaternary structure, forms a trimeric complex in the nucleus consisting of BANP, HDAC6 and KHDRBS1/SAM68; HDAC6 keeps KHDRBS1 in a deacetylated state which inhibits the inclusion of CD44 alternate exons. The complex is disrupted by MAPK1/MAPK3-mediated phosphorylation of BANP which results in BANP export to the cytoplasm. This facilitates acetylation of KHDRBS1 and CD44 variant exon inclusion. Interacts with SIRT2 (via both phosphorylated, unphosphorylated, active or inactive forms); the interaction is necessary for the complex to interact with alpha-tubulin. Under proteasome impairment conditions, interacts with UBD via its histone deacetylase 1 and UBP-type zinc-finger regions. Interacts with BBIP1, CBFA2T3, CYLD, DDIT3/CHOP, ZMYND15, F-actin and HDAC11. Interacts with RIPOR2; this interaction occurs during early myogenic differentiation and prevents HDAC6 to deacetylate tubulin. Interacts with AURKA; AURKA-mediated phosphorylation of HDAC6 promotes deacetylation of alpha-tubulin. Interacts with DYSF; this interaction occurs during early myogenic differentiation. Interacts with TPPP; inhibiting the tubulin deacetylase activity of HDAC6. Interacts with DYNLL1. Interacts with ATP13A2; the interaction results in recruitment of HDAC6 to lysosomes to promote CTTN deacetylation. Interacts with CCDC141 (via the N-terminal region); inhibiting the deacetylase activity of HDAC6. Interacts with IPO7; the interaction facilitates HDAC6 nuclear translocation in dental papilla cells. Zn(2+) serves as cofactor. Post-translationally, phosphorylated by AURKA; phosphorylation increases HDAC6-mediated deacetylation of alpha-tubulin and subsequent disassembly of cilia. In terms of processing, ubiquitinated. Its polyubiquitination however does not lead to its degradation. Sumoylated in vitro. As to expression, expressed in neurons of the cortex. Expressed in Purkinje cells. Detected in keratinocytes (at protein level).

The protein resides in the cytoplasm. It localises to the cytoskeleton. The protein localises to the nucleus. Its subcellular location is the perikaryon. It is found in the cell projection. The protein resides in the dendrite. It localises to the axon. The protein localises to the cilium. Its subcellular location is the microtubule organizing center. It is found in the centrosome. The protein resides in the cilium basal body. It catalyses the reaction N(6)-acetyl-L-lysyl-[protein] + H2O = L-lysyl-[protein] + acetate. The catalysed reaction is N(6)-acetyl-L-lysyl-[alpha-tubulin] + H2O = L-lysyl-[alpha-tubulin] + acetate. It participates in protein modification; protein ubiquitination. In terms of biological role, deacetylates a wide range of non-histone substrates. Plays a central role in microtubule-dependent cell motility by mediating deacetylation of tubulin. Required for cilia disassembly via deacetylation of alpha-tubulin. Alpha-tubulin deacetylation results in destabilization of dynamic microtubules. Promotes deacetylation of CTTN, leading to actin polymerization, promotion of autophagosome-lysosome fusion and completion of autophagy. Deacetylates SQSTM1. Deacetylates peroxiredoxins PRDX1 and PRDX2, decreasing their reducing activity. Deacetylates antiviral protein RIGI in the presence of viral mRNAs which is required for viral RNA detection by RIGI. Sequentially deacetylates and polyubiquitinates DNA mismatch repair protein MSH2 which leads to MSH2 degradation, reducing cellular sensitivity to DNA-damaging agents and decreasing cellular DNA mismatch repair activities. Deacetylates DNA mismatch repair protein MLH1 which prevents recruitment of the MutL alpha complex (formed by the MLH1-PMS2 heterodimer) to the MutS alpha complex (formed by the MSH2-MSH6 heterodimer), leading to tolerance of DNA damage. Deacetylates RHOT1/MIRO1 which blocks mitochondrial transport and mediates axon growth inhibition. Deacetylates transcription factor SP1 which leads to increased expression of ENG, positively regulating angiogenesis. Deacetylates KHDRBS1/SAM68 which regulates alternative splicing by inhibiting the inclusion of CD44 alternate exons. Promotes odontoblast differentiation following IPO7-mediated nuclear import and subsequent repression of RUNX2 expression. In addition to its protein deacetylase activity, plays a key role in the degradation of misfolded proteins: when misfolded proteins are too abundant to be degraded by the chaperone refolding system and the ubiquitin-proteasome, mediates the transport of misfolded proteins to a cytoplasmic juxtanuclear structure called aggresome. Probably acts as an adapter that recognizes polyubiquitinated misfolded proteins and target them to the aggresome, facilitating their clearance by autophagy. The polypeptide is Protein deacetylase HDAC6 (Mus musculus (Mouse)).